We begin with the raw amino-acid sequence, 679 residues long: Peptidoglycan D,D-transpeptidase FtsI homolog (679 aa).

The chain crosses the membrane as a helical span at residues 13-33 (VFLVWWLTALSCFFISGRLIY). Ser-292 serves as the catalytic Acyl-ester intermediate.

This sequence belongs to the transpeptidase family.

It localises to the plastid. It is found in the chloroplast membrane. It carries out the reaction Preferential cleavage: (Ac)2-L-Lys-D-Ala-|-D-Ala. Also transpeptidation of peptidyl-alanyl moieties that are N-acyl substituents of D-alanine.. This is Peptidoglycan D,D-transpeptidase FtsI homolog (ftsI) from Chlorokybus atmophyticus (Soil alga).